A 138-amino-acid chain; its full sequence is Cysteine desulfuration protein SufE (138 aa).

Cys51 serves as the catalytic Cysteine persulfide intermediate.

It belongs to the SufE family. In terms of assembly, homodimer. Interacts with SufS.

It localises to the cytoplasm. Its pathway is cofactor biosynthesis; iron-sulfur cluster biosynthesis. Its function is as follows. Participates in cysteine desulfuration mediated by SufS. Cysteine desulfuration mobilizes sulfur from L-cysteine to yield L-alanine and constitutes an essential step in sulfur metabolism for biosynthesis of a variety of sulfur-containing biomolecules. Functions as a sulfur acceptor for SufS, by mediating the direct transfer of the sulfur atom from the S-sulfanylcysteine of SufS, an intermediate product of cysteine desulfuration process. This chain is Cysteine desulfuration protein SufE, found in Cronobacter sakazakii (strain ATCC BAA-894) (Enterobacter sakazakii).